The primary structure comprises 148 residues: Nickel and cobalt resistance protein CnrR (148 aa).

An N-terminal signal peptide occupies residues 1–26; the sequence is MMKSRTRRLSLSTLFGALLGVSVAAA. The Periplasmic portion of the chain corresponds to 28–148; sequence LYYSHRNEAG…LIDALRRGSQ (121 aa). The stretch at 54 to 117 forms a coiled coil; sequence NEREILELKE…AAGDLQRATL (64 aa).

The protein to A.xylosoxydans NccX.

The protein localises to the periplasm. Functionally, cnrH alone is able to activate cnr expression, while both CnrY and CrnR (CnrX) are needed for nickel induction of CnrH. Has been suggested to bind nickel. In Cupriavidus metallidurans (strain ATCC 43123 / DSM 2839 / NBRC 102507 / CH34) (Ralstonia metallidurans), this protein is Nickel and cobalt resistance protein CnrR (cnrR).